Here is a 558-residue protein sequence, read N- to C-terminus: DALR anticodon-binding domain-containing protein 3 (558 aa).

The interval 213–240 is disordered; sequence KALENSAYRDRETEKGKRRSRGEEIEGE.

In Danio rerio (Zebrafish), this protein is DALR anticodon-binding domain-containing protein 3 (dalrd3).